The chain runs to 215 residues: Ependymin (215 aa).

The signal sequence occupies residues Met1–Ala20. N-linked (GlcNAc...) asparagine glycans are attached at residues Asn71 and Asn94.

Belongs to the ependymin family. Forms disulfide-linked dimers. Binds calcium through the terminal sialic acids. EPDs are synthesized in the meninx and secreted in the cerebrospinal fluid.

The protein localises to the secreted. Its function is as follows. May play a role in neural plasticity. May be involved during axon regeneration. The sequence is that of Ependymin (epd) from Cyprinus carpio (Common carp).